A 486-amino-acid chain; its full sequence is GDP-Man:Man(3)GlcNAc(2)-PP-Dol alpha-1,2-mannosyltransferase (486 aa).

The Lumenal portion of the chain corresponds to 1-16; the sequence is MAGPMCLCGMMRLLTA. The helical transmembrane segment at 17–37 threads the bilayer; the sequence is LFIPVLITSVGLCLIFVLLFI. The Cytoplasmic segment spans residues 38 to 229; the sequence is CTRLWVQRKK…SNNPVLSRLK (192 aa). Positions 230–250 form an intramembrane region, helical; that stretch reads LIYYYLFALFYGWVGSCSDVI. Over 251–393 the chain is Cytoplasmic; the sequence is MVNSTWTFSH…IGLHTMWNEH (143 aa). An intramembrane region (helical) is located at residues 394–414; the sequence is FGIGIVECMAAGTIILAHNSG. At 415-486 the chain is on the cytoplasmic side; the sequence is GPKLDIVVPH…FLASSEPLFK (72 aa).

Belongs to the glycosyltransferase group 1 family. Glycosyltransferase 4 subfamily.

It is found in the endoplasmic reticulum membrane. The catalysed reaction is an alpha-D-Man-(1-&gt;3)-[alpha-D-Man-(1-&gt;6)]-beta-D-Man-(1-&gt;4)-beta-D-GlcNAc-(1-&gt;4)-alpha-D-GlcNAc-diphospho-di-trans,poly-cis-dolichol + 2 GDP-alpha-D-mannose = an alpha-D-Man-(1-&gt;2)-alpha-D-Man-(1-&gt;2)-alpha-D-Man-(1-&gt;3)-[alpha-D-Man-(1-&gt;6)]-beta-D-Man-(1-&gt;4)-beta-D-GlcNAc-(1-&gt;4)-alpha-D-GlcNAc-diphospho-di-trans,poly-cis-dolichol + 2 GDP + 2 H(+). The protein operates within protein modification; protein glycosylation. Its function is as follows. GDP-Man:Man(3)GlcNAc(2)-PP-Dol alpha-1,2-mannosyltransferase that operates in the biosynthetic pathway of dolichol-linked oligosaccharides, the glycan precursors employed in protein asparagine (N)-glycosylation. The assembly of dolichol-linked oligosaccharides begins on the cytosolic side of the endoplasmic reticulum membrane and finishes in its lumen. The sequential addition of sugars to dolichol pyrophosphate produces dolichol-linked oligosaccharides containing fourteen sugars, including two GlcNAcs, nine mannoses and three glucoses. Once assembled, the oligosaccharide is transferred from the lipid to nascent proteins by oligosaccharyltransferases. Catalyzes, on the cytoplasmic face of the endoplasmic reticulum, the addition of the fourth and fifth mannose residues to the dolichol-linked oligosaccharide chain, to produce Man(5)GlcNAc(2)-PP-dolichol core oligosaccharide. Man(5)GlcNAc(2)-PP-dolichol is a substrate for ALG3, the following enzyme in the biosynthetic pathway. This Xenopus laevis (African clawed frog) protein is GDP-Man:Man(3)GlcNAc(2)-PP-Dol alpha-1,2-mannosyltransferase (alg11).